Consider the following 327-residue polypeptide: Ribosomal RNA large subunit methyltransferase F (327 aa).

The interval 1 to 31 (MTHPVTPKNTTRPTPANKPAASTLHPRNPHQ) is disordered.

The protein belongs to the methyltransferase superfamily. METTL16/RlmF family.

Its subcellular location is the cytoplasm. It carries out the reaction adenosine(1618) in 23S rRNA + S-adenosyl-L-methionine = N(6)-methyladenosine(1618) in 23S rRNA + S-adenosyl-L-homocysteine + H(+). Functionally, specifically methylates the adenine in position 1618 of 23S rRNA. The polypeptide is Ribosomal RNA large subunit methyltransferase F (Psychrobacter sp. (strain PRwf-1)).